Here is a 155-residue protein sequence, read N- to C-terminus: MSAKKNSHLVFENRKARHLYDLLDFLEAGIVLTGPEVKSLRSGHASFQDSYVDFKQGEGYIVGLHIPPYNNAGYVIQNPDRPRKLLLHRQELKMLASKVEQKGLTIVPLKLYFKNRKVKTEIALAKGRKLYDHRNELKKRAEAMDIKRELAARHL.

This sequence belongs to the SmpB family.

The protein localises to the cytoplasm. In terms of biological role, required for rescue of stalled ribosomes mediated by trans-translation. Binds to transfer-messenger RNA (tmRNA), required for stable association of tmRNA with ribosomes. tmRNA and SmpB together mimic tRNA shape, replacing the anticodon stem-loop with SmpB. tmRNA is encoded by the ssrA gene; the 2 termini fold to resemble tRNA(Ala) and it encodes a 'tag peptide', a short internal open reading frame. During trans-translation Ala-aminoacylated tmRNA acts like a tRNA, entering the A-site of stalled ribosomes, displacing the stalled mRNA. The ribosome then switches to translate the ORF on the tmRNA; the nascent peptide is terminated with the 'tag peptide' encoded by the tmRNA and targeted for degradation. The ribosome is freed to recommence translation, which seems to be the essential function of trans-translation. The polypeptide is SsrA-binding protein (Lawsonia intracellularis (strain PHE/MN1-00)).